The sequence spans 148 residues: UPF0735 ACT domain-containing protein Dred_1164 (148 aa).

The region spanning 72-147 (TLALLMEHQP…GVREVRLVGQ (76 aa)) is the ACT domain.

This sequence belongs to the UPF0735 family.

The chain is UPF0735 ACT domain-containing protein Dred_1164 from Desulforamulus reducens (strain ATCC BAA-1160 / DSM 100696 / MI-1) (Desulfotomaculum reducens).